The chain runs to 351 residues: MIIQRVVLDSRPGKNGNPVAENFRVEEVSLPDTINEGQVRVRTLYLSVDPYMRCKMNEETGADYLAPWQLAQVADGGGLGVIEESKHQKLAKGDFVTSFYWPWQTKAILDGNGLEKVDPQLVDGHLSYFLGAIGMPGLTSLIGVQEKGHVSAGSNQTMVVSGAAGACGSLAGQIGHLLGCSRVVGICGTHEKCLFLTSELGFDAAVNYKTGNVAEQLREACPDGVDVYFDNVGGDISNAVISQMNQNSHIILCGQISQYNKDVPYPPPLPPAVEAIQKERNITRERFMVLNYKDRFEPGILQLSQWFKEGKLKIKETVANGLENMGVAFQSMMTGGNIGKQIVRISEDSSP.

99-100 (FY) is a binding site for substrate. NADP(+) is bound by residues 165–168 (GACG), Lys192, Tyr208, Asn231, 253–259 (CGQISQY), 287–289 (FMV), and Asn337. 288-290 (MVL) is a binding site for substrate.

Belongs to the NADP-dependent oxidoreductase L4BD family. In terms of assembly, monomer.

It localises to the cytoplasm. The enzyme catalyses 13,14-dihydro-15-oxo-prostaglandin E2 + NAD(+) = 15-oxoprostaglandin E2 + NADH + H(+). It catalyses the reaction 13,14-dihydro-15-oxo-prostaglandin E2 + NADP(+) = 15-oxoprostaglandin E2 + NADPH + H(+). The catalysed reaction is 13,14-dihydro-15-oxo-PGF2alpha + NADP(+) = 15-oxoprostaglandin F2alpha + NADPH + H(+). It carries out the reaction 13,14-dihydro-15-oxo-prostaglandin E1 + NADP(+) = 15-oxoprostaglandin E1 + NADPH + H(+). The enzyme catalyses 13,14-dihydro-15-oxo-prostaglandin F1alpha + NADP(+) = 15-oxoprostaglandin F1alpha + NADPH + H(+). Functions as 15-oxo-prostaglandin 13-reductase and acts on 15-keto-PGE1, 15-keto-PGE2, 15-keto-PGE1-alpha and 15-keto-PGE2-alpha with highest activity towards 15-keto-PGE2. Overexpression represses transcriptional activity of PPARG and inhibits adipocyte differentiation. The sequence is that of Prostaglandin reductase 2 from Rattus norvegicus (Rat).